We begin with the raw amino-acid sequence, 314 residues long: ATP synthase gamma chain (314 aa).

It belongs to the ATPase gamma chain family. As to quaternary structure, F-type ATPases have 2 components, CF(1) - the catalytic core - and CF(0) - the membrane proton channel. CF(1) has five subunits: alpha(3), beta(3), gamma(1), delta(1), epsilon(1). CF(0) has three main subunits: a, b and c.

The protein localises to the cellular thylakoid membrane. Functionally, produces ATP from ADP in the presence of a proton gradient across the membrane. The gamma chain is believed to be important in regulating ATPase activity and the flow of protons through the CF(0) complex. This chain is ATP synthase gamma chain, found in Picosynechococcus sp. (strain ATCC 27264 / PCC 7002 / PR-6) (Agmenellum quadruplicatum).